The primary structure comprises 566 residues: DNA ligase B (566 aa).

K125 (N6-AMP-lysine intermediate) is an active-site residue.

This sequence belongs to the NAD-dependent DNA ligase family. LigB subfamily.

It carries out the reaction NAD(+) + (deoxyribonucleotide)n-3'-hydroxyl + 5'-phospho-(deoxyribonucleotide)m = (deoxyribonucleotide)n+m + AMP + beta-nicotinamide D-nucleotide.. Catalyzes the formation of phosphodiester linkages between 5'-phosphoryl and 3'-hydroxyl groups in double-stranded DNA using NAD as a coenzyme and as the energy source for the reaction. The protein is DNA ligase B of Pseudomonas putida (strain ATCC 700007 / DSM 6899 / JCM 31910 / BCRC 17059 / LMG 24140 / F1).